The sequence spans 308 residues: L-lactate dehydrogenase 2 (308 aa).

Residues valine 13, aspartate 34, arginine 39, tyrosine 64, and 78 to 79 (GV) contribute to the NAD(+) site. Residue arginine 87 coordinates substrate. Residue threonine 100 participates in NAD(+) binding. Substrate is bound at residue 119–122 (NPVD). Threonine 142 contacts NAD(+). Residue 147–150 (DSMR) coordinates substrate. Catalysis depends on histidine 174, which acts as the Proton acceptor. Threonine 224 provides a ligand contact to substrate.

Belongs to the LDH/MDH superfamily. LDH family. Homotetramer.

It localises to the cytoplasm. It carries out the reaction (S)-lactate + NAD(+) = pyruvate + NADH + H(+). It participates in fermentation; pyruvate fermentation to lactate; (S)-lactate from pyruvate: step 1/1. Its function is as follows. Catalyzes the conversion of lactate to pyruvate. This is L-lactate dehydrogenase 2 from Lactobacillus acidophilus (strain ATCC 700396 / NCK56 / N2 / NCFM).